Here is a 277-residue protein sequence, read N- to C-terminus: Thymidylate synthase (277 aa).

Arg-21 is a binding site for dUMP. His-51 contacts (6R)-5,10-methylene-5,6,7,8-tetrahydrofolate. 126–127 (RR) contacts dUMP. Cys-159 functions as the Nucleophile in the catalytic mechanism. DUMP contacts are provided by residues 179–182 (RSAD), Asn-190, and 220–222 (HLY). Residue Asp-182 participates in (6R)-5,10-methylene-5,6,7,8-tetrahydrofolate binding. A (6R)-5,10-methylene-5,6,7,8-tetrahydrofolate-binding site is contributed by Ala-276.

It belongs to the thymidylate synthase family. Bacterial-type ThyA subfamily. Homodimer.

It localises to the cytoplasm. The catalysed reaction is dUMP + (6R)-5,10-methylene-5,6,7,8-tetrahydrofolate = 7,8-dihydrofolate + dTMP. The protein operates within pyrimidine metabolism; dTTP biosynthesis. Its function is as follows. Catalyzes the reductive methylation of 2'-deoxyuridine-5'-monophosphate (dUMP) to 2'-deoxythymidine-5'-monophosphate (dTMP) while utilizing 5,10-methylenetetrahydrofolate (mTHF) as the methyl donor and reductant in the reaction, yielding dihydrofolate (DHF) as a by-product. This enzymatic reaction provides an intracellular de novo source of dTMP, an essential precursor for DNA biosynthesis. This is Thymidylate synthase from Thioalkalivibrio sulfidiphilus (strain HL-EbGR7).